A 1074-amino-acid polypeptide reads, in one-letter code: DNA double-strand break repair Rad50 ATPase (1074 aa).

ATP-binding positions include R12, 32–38 (NGSGKSS), and Q142. 2 coiled-coil regions span residues 355 to 402 (ELEK…REKA) and 452 to 506 (NLVE…KGLG). The region spanning 512–611 (LENLEDFSEL…KITRLKDAKK (100 aa)) is the Zinc-hook domain. Residues C559 and C562 each contribute to the Zn(2+) site. Coiled-coil stretches lie at residues 574 to 611 (TAEE…DAKK), 649 to 678 (LKLE…LQVQ), 749 to 823 (KEKL…EILE), and 865 to 895 (TEEK…LKAL). 973–978 (LLSGGE) serves as a coordination point for ATP.

This sequence belongs to the SMC family. RAD50 subfamily. As to quaternary structure, homodimer. Forms a heterotetramer composed of two Mre11 subunits and two Rad50 subunits. Zn(2+) serves as cofactor.

Functionally, part of the Rad50/Mre11 complex, which is involved in the early steps of DNA double-strand break (DSB) repair. The complex may facilitate opening of the processed DNA ends to aid in the recruitment of HerA and NurA. Rad50 controls the balance between DNA end bridging and DNA resection via ATP-dependent structural rearrangements of the Rad50/Mre11 complex. This is DNA double-strand break repair Rad50 ATPase from Methanosarcina acetivorans (strain ATCC 35395 / DSM 2834 / JCM 12185 / C2A).